Consider the following 1225-residue polypeptide: MFARKPPGAAPLGAMPVPDQPSSASEKTSSLSPGLNTSNGDGSETETTSAILASVKEQELQFERLTRELEAERQIVASQLERCKLGSETGSMSSMSSAEEQFQWQSQDGQKDIEDELTTGLELVDSCIRSLQESGILDPQDYSTGERPSLLSQSALQLNSKPEGSFQYPASYHSNQTLALGETTPSQLPARGTQARATGQSFSQGTTSRAGHLAGPEPAPPPPPPPREPFAPSLGSAFHLPDAPPAAAAAALYYSSSTLPAPPRGGSPLAAPQGGSPTKLQRGGSAPEGATYAAPRGSSPKQSPSRLAKSYSTSSPINIVVSSAGLSPIRVTSPPTVQSTISSSPIHQLSSTIGTYATLSPTKRLVHASEQYSKHSQELYATATLQRPGSLAAGSRASYSSQHGHLGPELRALQSPEHHIDPIYEDRVYQKPPMRSLSQSQGDPLPPAHTGTYRTSTAPSSPGVDSVPLQRTGSQHGPQNAAAATFQRASYAAGPASNYADPYRQLQYCPSVESPYSKSGPALPPEGTLARSPSIDSIQKDPREFGWRDPELPEVIQMLQHQFPSVQSNAAAYLQHLCFGDNKIKAEIRRQGGIQLLVDLLDHRMTEVHRSACGALRNLVYGKANDDNKIALKNCGGIPALVRLLRKTTDLEIRELVTGVLWNLSSCDALKMPIIQDALAVLTNAVIIPHSGWENSPLQDDRKIQLHSSQVLRNATGCLRNVSSAGEEARRRMRECDGLTDALLYVIQSALGSSEIDSKTVENCVCILRNLSYRLAAETSQGQHMGTDELDGLLCGEANGKDAESSGCWGKKKKKKKSQDQWDGVGPLPDCAEPPKGIQMLWHPSIVKPYLTLLSECSNPDTLEGAAGALQNLAAGSWKWSVYIRAAVRKEKGLPILVELLRIDNDRVVCAVATALRNMALDVRNKELIGKYAMRDLVHRLPGGNNSNNTASKAMSDDTVTAVCCTLHEVITKNMENAKALRDAGGIEKLVGISKSKGDKHSPKVVKAASQVLNSMWQYRDLRSLYKKDGWSQYHFVASSSTIERDRQRPYSSSRTPSISPVRVSPNNRSASAPASPREMISLKERKTDYECTGSNATYHGAKGEHTSRKDAMTAQNTGISTLYRNSYGAPAEDIKHNQVSAQPVPQEPSRKDYETYQPFQNSTRNYDESFFEDQVHHRPPASEYTMHLGLKSTGNYVDFYSAARPYSELNYETSHYPASPDSWV.

4 disordered regions span residues 1–51, 87–117, 134–242, and 256–312; these read MFAR…TSAI, SETGSMSSMSSAEEQFQWQSQDGQKDIEDEL, SGIL…HLPD, and SSTL…KSYS. Composition is skewed to polar residues over residues 20–51 and 98–108; these read QPSSASEKTSSLSPGLNTSNGDGSETETTSAI and AEEQFQWQSQD. A coiled-coil region spans residues 49–84; that stretch reads SAILASVKEQELQFERLTRELEAERQIVASQLERCK. A compositionally biased stretch (low complexity) spans 149 to 160; sequence SLLSQSALQLNS. Composition is skewed to polar residues over residues 172–187 and 195–209; these read YHSNQTLALGETTPSQ and ARATGQSFSQGTTSR. Arg209 is modified (omega-N-methylarginine). The segment covering 217 to 229 has biased composition (pro residues); that stretch reads EPAPPPPPPPREP. At Arg264 the chain carries Omega-N-methylarginine. 2 positions are modified to phosphoserine: Ser267 and Ser276. An omega-N-methylarginine mark is found at Arg282 and Arg296. Polar residues predominate over residues 299 to 312; it reads SPKQSPSRLAKSYS. 4 positions are modified to phosphoserine: Ser327, Ser360, Ser415, and Ser461. The stretch at 394–438 is one ARM 1 repeat; the sequence is GSRASYSSQHGHLGPELRALQSPEHHIDPIYEDRVYQKPPMRSLS. 2 disordered regions span residues 432–483 and 514–542; these read PPMR…NAAA and SPYSKSGPALPPEGTLARSPSIDSIQKDP. The span at 469-478 shows a compositional bias: polar residues; it reads LQRTGSQHGP. Residue Ser514 is modified to Phosphoserine. A Phosphotyrosine modification is found at Tyr516. 8 ARM repeats span residues 540–579, 582–621, 626–666, 682–724, 728–773, 835–875, 882–921, and 975–1018; these read KDPREFGWRDPELPEVIQMLQHQFPSVQSNAAAYLQHLCF, NKIKAEIRRQGGIQLLVDLLDHRMTEVHRSACGALRNLVY, DDNK…NLSS, LTNA…NVSS, EARR…NLSY, PKGI…NLAA, VYIRAAVRKEKGLPILVELLRIDNDRVVCAVATALRNMAL, and MENA…SMWQ. Positions 1042–1077 are disordered; it reads TIERDRQRPYSSSRTPSISPVRVSPNNRSASAPASP. Positions 1050-1059 are enriched in polar residues; it reads PYSSSRTPSI. Phosphoserine occurs at positions 1065 and 1076. The segment covering 1065–1077 has biased composition (low complexity); sequence SPNNRSASAPASP.

Belongs to the beta-catenin family. As to quaternary structure, binds to E-cadherin at a juxtamembrane site within the cytoplasmic domain. Interacts with PDZD2. Interacts with ZBTB33. Binds to PSEN1. Interacts with ARHGEF28. Interacts (via the extreme C-terminus) with FRMPD2 (via the PDZ 2 domain). Interacts with CDK5. Interacts with CTNNB1. Interacts with GSK3A and GSK3B. Interacts with DNM2. Interacts with CCDC85B. O-glycosylated. In terms of processing, phosphorylated by CDK5. Phosphorylated by GSK3B. Expressed in brain; highest expression is observed in fetal brain.

It is found in the nucleus. It localises to the cell junction. The protein localises to the adherens junction. The protein resides in the cell projection. Its subcellular location is the dendrite. It is found in the perikaryon. Has a critical role in neuronal development, particularly in the formation and/or maintenance of dendritic spines and synapses. Involved in the regulation of Wnt signaling. It probably acts on beta-catenin turnover, facilitating beta-catenin interaction with GSK3B, phosphorylation, ubiquitination and degradation. Functions as a transcriptional activator when bound to ZBTB33. May be involved in neuronal cell adhesion and tissue morphogenesis and integrity by regulating adhesion molecules. The chain is Catenin delta-2 (CTNND2) from Homo sapiens (Human).